Consider the following 300-residue polypeptide: GTPase Era (300 aa).

Residues Lys-4–Lys-173 form the Era-type G domain. The G1 stretch occupies residues Gly-12 to Ser-19. Gly-12–Ser-19 lines the GTP pocket. Residues Gln-38–Asn-42 form a G2 region. A G3 region spans residues Asp-59–Gly-62. GTP is bound by residues Asp-59–Phe-63 and Ser-122–Glu-125. Positions Ser-122 to Glu-125 are G4. Positions Ile-152–Ala-154 are G5. The 79-residue stretch at Leu-204–Asn-282 folds into the KH type-2 domain.

The protein belongs to the TRAFAC class TrmE-Era-EngA-EngB-Septin-like GTPase superfamily. Era GTPase family. Monomer.

The protein resides in the cytoplasm. It localises to the cell membrane. Its function is as follows. An essential GTPase that binds both GDP and GTP, with rapid nucleotide exchange. Plays a role in 16S rRNA processing and 30S ribosomal subunit biogenesis and possibly also in cell cycle regulation and energy metabolism. This is GTPase Era from Ureaplasma parvum serovar 3 (strain ATCC 27815 / 27 / NCTC 11736).